The primary structure comprises 334 residues: S-adenosylmethionine decarboxylase proenzyme 1 (334 aa).

F7 provides a ligand contact to substrate. Residues E8 and E11 contribute to the active site. Residue E67 coordinates substrate. The Schiff-base intermediate with substrate; via pyruvic acid role is filled by S68. Residue S68 is modified to Pyruvic acid (Ser); by autocatalysis. C82 functions as the Proton donor; for catalytic activity in the catalytic mechanism. F223 serves as a coordination point for substrate. Residues S229 and H243 each act as proton acceptor; for processing activity in the active site. Residue E247 coordinates substrate. A Phosphoserine modification is found at S298.

This sequence belongs to the eukaryotic AdoMetDC family. As to quaternary structure, heterotetramer of two alpha and two beta chains. Pyruvate is required as a cofactor. Post-translationally, is synthesized initially as an inactive proenzyme. Formation of the active enzyme involves a self-maturation process in which the active site pyruvoyl group is generated from an internal serine residue via an autocatalytic post-translational modification. Two non-identical subunits are generated from the proenzyme in this reaction, and the pyruvate is formed at the N-terminus of the alpha chain, which is derived from the carboxyl end of the proenzyme. The post-translation cleavage follows an unusual pathway, termed non-hydrolytic serinolysis, in which the side chain hydroxyl group of the serine supplies its oxygen atom to form the C-terminus of the beta chain, while the remainder of the serine residue undergoes an oxidative deamination to produce ammonia and the pyruvoyl group blocking the N-terminus of the alpha chain. Expressed in embryonic stem cells; subsequently down-regulated in differentiating neural precursor cells.

It carries out the reaction S-adenosyl-L-methionine + H(+) = S-adenosyl 3-(methylsulfanyl)propylamine + CO2. It functions in the pathway amine and polyamine biosynthesis; S-adenosylmethioninamine biosynthesis; S-adenosylmethioninamine from S-adenosyl-L-methionine: step 1/1. Its function is as follows. Essential for biosynthesis of the polyamines spermidine and spermine. Promotes maintenance and self-renewal of embryonic stem cells, by maintaining spermine levels. The protein is S-adenosylmethionine decarboxylase proenzyme 1 (Amd1) of Mus musculus (Mouse).